The following is a 476-amino-acid chain: Undecaprenyl-phosphate galactose phosphotransferase (476 aa).

A run of 5 helical transmembrane segments spans residues 15–35 (IFLA…SLGC), 52–72 (LDTR…WFWI), 93–113 (TIVI…WQFS), 115–135 (YVWV…RALT), and 283–303 (FDIV…IYLW). Residues 304–476 (YKVTRDGGPA…KVVLRRDGAY (173 aa)) are Cytoplasmic-facing.

The protein belongs to the bacterial sugar transferase family.

Its subcellular location is the cell inner membrane. It catalyses the reaction di-trans,octa-cis-undecaprenyl phosphate + UDP-alpha-D-galactose = alpha-D-galactosyl-di-trans,octa-cis-undecaprenyl diphosphate + UMP. The protein operates within bacterial outer membrane biogenesis; LPS O-antigen biosynthesis. In terms of biological role, is responsible for transferring galactose-1-phosphate to the lipid precursor undecaprenol phosphate in the first steps of O-polysaccharide biosynthesis. This is Undecaprenyl-phosphate galactose phosphotransferase (rfbP) from Salmonella typhimurium (strain LT2 / SGSC1412 / ATCC 700720).